Reading from the N-terminus, the 195-residue chain is Large ribosomal subunit protein eL6 (195 aa).

Residues Ser-105 and Ser-115 each carry the phosphoserine modification.

The protein belongs to the eukaryotic ribosomal protein eL6 family. As to quaternary structure, component of the large ribosomal subunit (LSU). Mature yeast ribosomes consist of a small (40S) and a large (60S) subunit. The 40S small subunit contains 1 molecule of ribosomal RNA (18S rRNA) and at least 33 different proteins. The large 60S subunit contains 3 rRNA molecules (25S, 5.8S and 5S rRNA) and at least 46 different proteins.

It is found in the cytoplasm. The protein resides in the nucleus. The protein localises to the nucleolus. Functionally, component of the ribosome, a large ribonucleoprotein complex responsible for the synthesis of proteins in the cell. The small ribosomal subunit (SSU) binds messenger RNAs (mRNAs) and translates the encoded message by selecting cognate aminoacyl-transfer RNA (tRNA) molecules. The large subunit (LSU) contains the ribosomal catalytic site termed the peptidyl transferase center (PTC), which catalyzes the formation of peptide bonds, thereby polymerizing the amino acids delivered by tRNAs into a polypeptide chain. The nascent polypeptides leave the ribosome through a tunnel in the LSU and interact with protein factors that function in enzymatic processing, targeting, and the membrane insertion of nascent chains at the exit of the ribosomal tunnel. This Schizosaccharomyces pombe (strain 972 / ATCC 24843) (Fission yeast) protein is Large ribosomal subunit protein eL6 (rpl6).